Reading from the N-terminus, the 179-residue chain is Large ribosomal subunit protein uL5 (179 aa).

This sequence belongs to the universal ribosomal protein uL5 family. As to quaternary structure, part of the 50S ribosomal subunit; part of the 5S rRNA/L5/L18/L25 subcomplex. Contacts the 5S rRNA and the P site tRNA. Forms a bridge to the 30S subunit in the 70S ribosome.

Its function is as follows. This is one of the proteins that bind and probably mediate the attachment of the 5S RNA into the large ribosomal subunit, where it forms part of the central protuberance. In the 70S ribosome it contacts protein S13 of the 30S subunit (bridge B1b), connecting the 2 subunits; this bridge is implicated in subunit movement. Contacts the P site tRNA; the 5S rRNA and some of its associated proteins might help stabilize positioning of ribosome-bound tRNAs. The polypeptide is Large ribosomal subunit protein uL5 (Bacillus cereus (strain 03BB102)).